A 227-amino-acid chain; its full sequence is E3 ubiquitin-protein ligase ZNRF1 (227 aa).

Positions 1–42 are disordered; sequence MGGKQSTAARSRGPFPGVSTDDSAVPPPGGAPHFGHYRTGGG. G2 carries the N-myristoyl glycine lipid modification. Residues 2–10 are required for endosomal and lysosomal localization and myristoylation; it reads GGKQSTAAR. Phosphoserine is present on residues S50, S52, and S53. The segment at 68–105 is disordered; it reads PFGLYTPASRGTGDSERAPGGGGSASDSTYAHGNGYQE. Y103 bears the Phosphotyrosine; by SRC mark. Residue S123 is modified to Phosphoserine. An RING-type; atypical zinc finger spans residues 184 to 225; that stretch reads CVICLEELLQGDTIARLPCLCIYHKSCIDSWFEVNRSCPEHP.

In terms of assembly, interacts with AKT1, GLUL and TUBB2A. Interacts with ZNRF2. Interacts (via its RING domain) with UBE2N. Interacts (when phosphorylated) with YWHAE. Post-translationally, N-myristoylation targets ZNRF1 to intracellular membranes. In terms of processing, phosphorylated by SRC at Tyr-103; leading to 'Lys-63'-linked ubiquitination of TLR3, lysosomal trafficking and degradation. In terms of tissue distribution, expressed primarily in the nervous system, with expression higher in developing brain relative to adult. Expressed at low levels in testis and thymus.

It localises to the endosome. Its subcellular location is the lysosome. The protein localises to the membrane. The protein resides in the cytoplasmic vesicle. It is found in the secretory vesicle. It localises to the synaptic vesicle membrane. The catalysed reaction is S-ubiquitinyl-[E2 ubiquitin-conjugating enzyme]-L-cysteine + [acceptor protein]-L-lysine = [E2 ubiquitin-conjugating enzyme]-L-cysteine + N(6)-ubiquitinyl-[acceptor protein]-L-lysine.. It functions in the pathway protein modification; protein ubiquitination. In terms of biological role, E3 ubiquitin-protein ligase that plays a role in different processes including cell differentiation, receptor recycling or regulation of inflammation. Mediates the ubiquitination of AKT1 and GLUL, thereby playing a role in neuron cells differentiation. Plays a role in the establishment and maintenance of neuronal transmission and plasticity. Regulates Schwann cells differentiation by mediating ubiquitination of GLUL. Promotes neurodegeneration by mediating 'Lys-48'-linked polyubiquitination and subsequent degradation of AKT1 in axons: degradation of AKT1 prevents AKT1-mediated phosphorylation of GSK3B, leading to GSK3B activation and phosphorylation of DPYSL2/CRMP2 followed by destabilization of microtubule assembly in axons. Ubiquitinates the Na(+)/K(+) ATPase alpha-1 subunit/ATP1A1 and thereby influences its endocytosis and/or degradation. Controls ligand-induced EGFR signaling via mediating receptor ubiquitination and recruitment of the ESCRT machinery. Acts as a negative feedback mechanism controlling TLR3 trafficking by mediating TLR3 'Lys-63'-linked polyubiquitination to reduce type I IFN production. Modulates inflammation by promoting caveolin-1/CAV1 ubiquitination and degradation to regulate TLR4-activated immune response. The protein is E3 ubiquitin-protein ligase ZNRF1 (ZNRF1) of Homo sapiens (Human).